The sequence spans 100 residues: Integration host factor subunit alpha (100 aa).

The disordered stretch occupies residues 53-72 (FDLRDKRQRPGRNPKTGEEI).

This sequence belongs to the bacterial histone-like protein family. As to quaternary structure, heterodimer of an alpha and a beta chain.

In terms of biological role, this protein is one of the two subunits of integration host factor, a specific DNA-binding protein that functions in genetic recombination as well as in transcriptional and translational control. This is Integration host factor subunit alpha from Pseudomonas putida (strain ATCC 700007 / DSM 6899 / JCM 31910 / BCRC 17059 / LMG 24140 / F1).